We begin with the raw amino-acid sequence, 340 residues long: Probable glucan endo-1,3-beta-glucosidase BG1 (340 aa).

Positions 1–25 (MDLRFLASLTLLLGLFFVNTNPTGG) are cleaved as a signal peptide. Catalysis depends on Glu-120, which acts as the Proton donor. Glu-262 functions as the Nucleophile in the catalytic mechanism.

It belongs to the glycosyl hydrolase 17 family.

Its subcellular location is the secreted. It catalyses the reaction Hydrolysis of (1-&gt;3)-beta-D-glucosidic linkages in (1-&gt;3)-beta-D-glucans.. May play a role in plant defense against pathogens. The protein is Probable glucan endo-1,3-beta-glucosidase BG1 of Arabidopsis thaliana (Mouse-ear cress).